A 386-amino-acid polypeptide reads, in one-letter code: Cell division protein FtsZ (386 aa).

Residues 21–25, 108–110, E139, R143, and N187 each bind GTP; these read GGGGN and GTG.

This sequence belongs to the FtsZ family. Homodimer. Polymerizes to form a dynamic ring structure in a strictly GTP-dependent manner. Interacts directly with several other division proteins.

The protein localises to the cytoplasm. Functionally, essential cell division protein that forms a contractile ring structure (Z ring) at the future cell division site. The regulation of the ring assembly controls the timing and the location of cell division. One of the functions of the FtsZ ring is to recruit other cell division proteins to the septum to produce a new cell wall between the dividing cells. Binds GTP and shows GTPase activity. This Coxiella burnetii (strain RSA 493 / Nine Mile phase I) protein is Cell division protein FtsZ.